Reading from the N-terminus, the 897-residue chain is Isoleucine--tRNA ligase (897 aa).

The short motif at 59 to 69 (PYANGDIHVGH) is the 'HIGH' region element. Glutamate 552 is a binding site for L-isoleucyl-5'-AMP. Residues 593 to 597 (KMSKS) carry the 'KMSKS' region motif. Lysine 596 contacts ATP. 4 residues coordinate Zn(2+): cysteine 872, cysteine 875, cysteine 890, and cysteine 893.

Belongs to the class-I aminoacyl-tRNA synthetase family. IleS type 1 subfamily. Monomer. Zn(2+) is required as a cofactor.

It localises to the cytoplasm. The catalysed reaction is tRNA(Ile) + L-isoleucine + ATP = L-isoleucyl-tRNA(Ile) + AMP + diphosphate. Its function is as follows. Catalyzes the attachment of isoleucine to tRNA(Ile). As IleRS can inadvertently accommodate and process structurally similar amino acids such as valine, to avoid such errors it has two additional distinct tRNA(Ile)-dependent editing activities. One activity is designated as 'pretransfer' editing and involves the hydrolysis of activated Val-AMP. The other activity is designated 'posttransfer' editing and involves deacylation of mischarged Val-tRNA(Ile). In Mycoplasmoides gallisepticum (strain R(low / passage 15 / clone 2)) (Mycoplasma gallisepticum), this protein is Isoleucine--tRNA ligase.